The primary structure comprises 436 residues: Probable mediator of RNA polymerase II transcription subunit 26b (436 aa).

Residues Pro71 to Asp111 form a disordered region. The region spanning Lys139–Trp214 is the TFIIS N-terminal domain. The tract at residues His263–Asp376 is disordered. 2 stretches are compositionally biased toward basic and acidic residues: residues Asn276 to Pro290 and Thr332 to Met350. Positions Glu382 to Arg402 form a coiled coil. Positions Glu408–Lys436 are disordered. Polar residues predominate over residues Ser427–Lys436.

The protein belongs to the Mediator complex subunit 26 family. Component of the Mediator complex.

The protein resides in the nucleus. In terms of biological role, component of the Mediator complex, a coactivator involved in the regulated transcription of nearly all RNA polymerase II-dependent genes. Mediator functions as a bridge to convey information from gene-specific regulatory proteins to the basal RNA polymerase II transcription machinery. The Mediator complex, having a compact conformation in its free form, is recruited to promoters by direct interactions with regulatory proteins and serves for the assembly of a functional preinitiation complex with RNA polymerase II and the general transcription factors. May play a role in transcription elongation. The protein is Probable mediator of RNA polymerase II transcription subunit 26b (MED26B) of Arabidopsis thaliana (Mouse-ear cress).